The primary structure comprises 119 residues: Ribosome-binding factor A (119 aa).

This sequence belongs to the RbfA family. Monomer. Binds 30S ribosomal subunits, but not 50S ribosomal subunits or 70S ribosomes.

The protein localises to the cytoplasm. One of several proteins that assist in the late maturation steps of the functional core of the 30S ribosomal subunit. Associates with free 30S ribosomal subunits (but not with 30S subunits that are part of 70S ribosomes or polysomes). Required for efficient processing of 16S rRNA. May interact with the 5'-terminal helix region of 16S rRNA. The protein is Ribosome-binding factor A of Geobacter sp. (strain M21).